The sequence spans 573 residues: 2-succinyl-5-enolpyruvyl-6-hydroxy-3-cyclohexene-1-carboxylate synthase (573 aa).

The protein belongs to the TPP enzyme family. MenD subfamily. Homodimer. It depends on Mg(2+) as a cofactor. Requires Mn(2+) as cofactor. Thiamine diphosphate is required as a cofactor.

The enzyme catalyses isochorismate + 2-oxoglutarate + H(+) = 5-enolpyruvoyl-6-hydroxy-2-succinyl-cyclohex-3-ene-1-carboxylate + CO2. It participates in quinol/quinone metabolism; 1,4-dihydroxy-2-naphthoate biosynthesis; 1,4-dihydroxy-2-naphthoate from chorismate: step 2/7. The protein operates within quinol/quinone metabolism; menaquinone biosynthesis. Functionally, catalyzes the thiamine diphosphate-dependent decarboxylation of 2-oxoglutarate and the subsequent addition of the resulting succinic semialdehyde-thiamine pyrophosphate anion to isochorismate to yield 2-succinyl-5-enolpyruvyl-6-hydroxy-3-cyclohexene-1-carboxylate (SEPHCHC). In Shewanella baltica (strain OS185), this protein is 2-succinyl-5-enolpyruvyl-6-hydroxy-3-cyclohexene-1-carboxylate synthase.